The sequence spans 176 residues: Ribosome maturation factor RimM (176 aa).

The PRC barrel domain occupies Glu97–Phe176.

It belongs to the RimM family. As to quaternary structure, binds ribosomal protein uS19.

Its subcellular location is the cytoplasm. An accessory protein needed during the final step in the assembly of 30S ribosomal subunit, possibly for assembly of the head region. Essential for efficient processing of 16S rRNA. May be needed both before and after RbfA during the maturation of 16S rRNA. It has affinity for free ribosomal 30S subunits but not for 70S ribosomes. The protein is Ribosome maturation factor RimM of Shewanella putrefaciens (strain CN-32 / ATCC BAA-453).